The sequence spans 510 residues: Cytochrome P450 705A20 (510 aa).

A helical transmembrane segment spans residues 7–27; the sequence is QHCFSFILLCFFSLLCYSLLF.

The protein belongs to the cytochrome P450 family. Requires heme as cofactor.

The protein resides in the membrane. This Arabidopsis thaliana (Mouse-ear cress) protein is Cytochrome P450 705A20 (CYP705A20).